Here is a 328-residue protein sequence, read N- to C-terminus: Cytochrome c biogenesis protein CcsA (328 aa).

The next 8 membrane-spanning stretches (helical) occupy residues 13–33, 46–66, 73–93, 101–121, 146–166, 234–254, 263–283, and 295–315; these read ISFSVVSIVLTIYFFTLLVNL, GIVITFFGITGLLFTRWIYSG, LYESLIFLSWAFSIIHMVSYF, LNAITAPSAIFIQGFATSGLL, MILGYGALLCGSLLSIALLVI, IISLGFIFLTVGILSGAVWAN, WDPKETWAFITWTIFAIYLHI, and AIVASIGFLLIWICYFGVNLL.

This sequence belongs to the CcmF/CycK/Ccl1/NrfE/CcsA family. As to quaternary structure, may interact with Ccs1.

The protein resides in the plastid. It localises to the chloroplast thylakoid membrane. In terms of biological role, required during biogenesis of c-type cytochromes (cytochrome c6 and cytochrome f) at the step of heme attachment. The polypeptide is Cytochrome c biogenesis protein CcsA (Barbarea verna (Land cress)).